A 290-amino-acid chain; its full sequence is 4-hydroxy-tetrahydrodipicolinate synthase (290 aa).

Thr44 lines the pyruvate pocket. Tyr132 serves as the catalytic Proton donor/acceptor. Lys160 acts as the Schiff-base intermediate with substrate in catalysis. Pyruvate is bound at residue Ile202.

Belongs to the DapA family. As to quaternary structure, homotetramer; dimer of dimers.

It is found in the cytoplasm. The enzyme catalyses L-aspartate 4-semialdehyde + pyruvate = (2S,4S)-4-hydroxy-2,3,4,5-tetrahydrodipicolinate + H2O + H(+). It participates in amino-acid biosynthesis; L-lysine biosynthesis via DAP pathway; (S)-tetrahydrodipicolinate from L-aspartate: step 3/4. Its function is as follows. Catalyzes the condensation of (S)-aspartate-beta-semialdehyde [(S)-ASA] and pyruvate to 4-hydroxy-tetrahydrodipicolinate (HTPA). In Legionella pneumophila (strain Corby), this protein is 4-hydroxy-tetrahydrodipicolinate synthase.